Here is a 221-residue protein sequence, read N- to C-terminus: uncharacterized protein (221 aa).

The Extracellular segment spans residues 1-45 (MYAPIRSPITELNESTPSSIPVATSYATCSASFAKLVALLVDDMA). A helical membrane pass occupies residues 46 to 66 (GLSIVLSEIYIYFKLLFLIVI). Residues 67–221 (TESIQNKLED…KYIVVIKVEQ (155 aa)) lie on the Cytoplasmic side of the membrane.

The protein localises to the host membrane. This is an uncharacterized protein from Acidianus filamentous virus 1 (isolate United States/Yellowstone) (AFV-1).